Here is a 446-residue protein sequence, read N- to C-terminus: NADH-dependent phenylglyoxylate dehydrogenase subunit beta (446 aa).

4Fe-4S ferredoxin-type domains are found at residues 6 to 35, 49 to 80, 82 to 111, and 109 to 141; these read STIAFDPAKCDGCGDCMTACAQAKTGTDDI, ADKTFELALCRQCADPKCVTVCPAGALNKDGT, GVIGWDATKCVDCLLCTVGCAYAGIALDEA, and DEATGHVAKCDTCDGNPACVPACPHGALKHITT.

In terms of assembly, dimer of heteropentamers composed of an alpha (PadG), a beta (PadI), a gamma (PadE), a delta (PadF) and an epsilon (PadH) subunit. It depends on [4Fe-4S] cluster as a cofactor.

It carries out the reaction phenylglyoxylate + NAD(+) + CoA = benzoyl-CoA + CO2 + NADH. Its activity is regulated as follows. Activated by magnesium ions and thiamine diphosphate. Involved in the anaerobic metabolism of phenylalanine and phenylacetate. Catalyzes the oxidative decarboxylation of phenylglyoxylate to benzoyl-CoA and CO(2). It can also react slowly with 2-oxo-3-methylbutanoate and use different electron acceptors such as benzyl viologen, methyl viologen, FAD or FMN, but NAD seems to be the physiological electron acceptor. Also catalyzes an isotope exchange between CO(2) and the carboxyl group which proves partial or complete reversibility of the oxidative decarboxylation reaction. This chain is NADH-dependent phenylglyoxylate dehydrogenase subunit beta (padI), found in Aromatoleum evansii (Azoarcus evansii).